A 365-amino-acid chain; its full sequence is N-acetylgalactosamine-N,N'-diacetylbacillosaminyl-diphospho-undecaprenol 4-alpha-N-acetylgalactosaminyltransferase (365 aa).

It belongs to the glycosyltransferase group 1 family.

Its subcellular location is the cell inner membrane. It catalyses the reaction N-acetyl-alpha-D-galactosaminyl-(1-&gt;3)-N,N'-diacetyl-alpha-D-bacillosaminyl-tri-trans,hepta-cis-undecaprenyl diphosphate + UDP-N-acetyl-alpha-D-galactosamine = N-acetyl-alpha-D-galactosaminyl-(1-&gt;4)-N-acetyl-alpha-D-galactosaminyl-(1-&gt;3)-N,N'-diacetyl-alpha-D-bacillosaminyl-tri-trans,heptacis-undecaprenyl diphosphate + UDP + H(+). Its pathway is protein modification; protein glycosylation. Adds a GalNAc residue on to the Und-PP-Bac2,4diNAc-GalNAc disaccharide in the N-linked protein glycosylation pathway. Transfers the third sugar in the heptasaccharide biosynthesis. The sequence is that of N-acetylgalactosamine-N,N'-diacetylbacillosaminyl-diphospho-undecaprenol 4-alpha-N-acetylgalactosaminyltransferase (pglJ) from Campylobacter jejuni subsp. jejuni serotype O:2 (strain ATCC 700819 / NCTC 11168).